Reading from the N-terminus, the 265-residue chain is Mlc titration factor A (265 aa).

His-111, His-148, His-152, and Glu-211 together coordinate Zn(2+).

Belongs to the MtfA family. Interacts with Mlc. Zn(2+) is required as a cofactor.

The protein resides in the cytoplasm. Functionally, involved in the modulation of the activity of the glucose-phosphotransferase system (glucose-PTS). Interacts with the transcriptional repressor Mlc, preventing its interaction with DNA and leading to the modulation of expression of genes regulated by Mlc, including ptsG, which encodes the PTS system glucose-specific EIICB component. Its function is as follows. Shows zinc-dependent metallopeptidase activity. In Shigella dysenteriae serotype 1 (strain Sd197), this protein is Mlc titration factor A.